We begin with the raw amino-acid sequence, 290 residues long: Phosphatidylglycerol--prolipoprotein diacylglyceryl transferase (290 aa).

7 helical membrane passes run 21-41 (VSLH…MWLA), 60-80 (LLYA…VLFY), 98-118 (GGMS…WFAH), 124-144 (FFQV…AGRL), 198-218 (SQLY…NLFI), 224-244 (IGSV…LVEF), and 258-278 (VISM…IMMA). Residue R143 participates in a 1,2-diacyl-sn-glycero-3-phospho-(1'-sn-glycerol) binding.

The protein belongs to the Lgt family.

The protein localises to the cell inner membrane. The catalysed reaction is L-cysteinyl-[prolipoprotein] + a 1,2-diacyl-sn-glycero-3-phospho-(1'-sn-glycerol) = an S-1,2-diacyl-sn-glyceryl-L-cysteinyl-[prolipoprotein] + sn-glycerol 1-phosphate + H(+). Its pathway is protein modification; lipoprotein biosynthesis (diacylglyceryl transfer). In terms of biological role, catalyzes the transfer of the diacylglyceryl group from phosphatidylglycerol to the sulfhydryl group of the N-terminal cysteine of a prolipoprotein, the first step in the formation of mature lipoproteins. This Sodalis glossinidius (strain morsitans) protein is Phosphatidylglycerol--prolipoprotein diacylglyceryl transferase.